Consider the following 315-residue polypeptide: Ribosome biogenesis protein BRX1 homolog 1 (315 aa).

Residues 1-35 (MGRKRKHSETVTAAPVKDSAPERPQRTLLGWKDKK) are disordered. Residues 19–35 (SAPERPQRTLLGWKDKK) show a composition bias toward basic and acidic residues. The Brix domain maps to 53–256 (EKVLVTCSRR…PIKIFGGSFG (204 aa)).

Belongs to the BRX1 family. Expressed in roots, rosette leaves, stems, flowers, siliques and seeds.

It localises to the nucleus. It is found in the nucleolus. Involved in pre-rRNA processing and required for biogenesis of the large (60S) ribosomal subunit. Required for proper development. This is Ribosome biogenesis protein BRX1 homolog 1 from Arabidopsis thaliana (Mouse-ear cress).